Here is a 441-residue protein sequence, read N- to C-terminus: ATP-dependent protease ATPase subunit HslU (441 aa).

ATP-binding positions include isoleucine 18, 60 to 65 (GVGKTE), aspartate 254, glutamate 319, and arginine 391.

This sequence belongs to the ClpX chaperone family. HslU subfamily. As to quaternary structure, a double ring-shaped homohexamer of HslV is capped on each side by a ring-shaped HslU homohexamer. The assembly of the HslU/HslV complex is dependent on binding of ATP.

The protein localises to the cytoplasm. Functionally, ATPase subunit of a proteasome-like degradation complex; this subunit has chaperone activity. The binding of ATP and its subsequent hydrolysis by HslU are essential for unfolding of protein substrates subsequently hydrolyzed by HslV. HslU recognizes the N-terminal part of its protein substrates and unfolds these before they are guided to HslV for hydrolysis. The chain is ATP-dependent protease ATPase subunit HslU from Shewanella halifaxensis (strain HAW-EB4).